Consider the following 456-residue polypeptide: Phosphomethylpyrimidine synthase (456 aa).

Substrate contacts are provided by residues Asn80, Met109, Tyr139, His175, 195–197 (SRG), 236–239 (DSLR), and Glu275. Residue His279 coordinates Zn(2+). Residue Tyr302 coordinates substrate. His343 is a Zn(2+) binding site. [4Fe-4S] cluster contacts are provided by Cys423, Cys426, and Cys431.

It belongs to the ThiC family. [4Fe-4S] cluster is required as a cofactor.

It carries out the reaction 5-amino-1-(5-phospho-beta-D-ribosyl)imidazole + S-adenosyl-L-methionine = 4-amino-2-methyl-5-(phosphooxymethyl)pyrimidine + CO + 5'-deoxyadenosine + formate + L-methionine + 3 H(+). Its pathway is cofactor biosynthesis; thiamine diphosphate biosynthesis. Catalyzes the synthesis of the hydroxymethylpyrimidine phosphate (HMP-P) moiety of thiamine from aminoimidazole ribotide (AIR) in a radical S-adenosyl-L-methionine (SAM)-dependent reaction. In Prochlorococcus marinus subsp. pastoris (strain CCMP1986 / NIES-2087 / MED4), this protein is Phosphomethylpyrimidine synthase.